A 1060-amino-acid polypeptide reads, in one-letter code: Probable serine/threonine-protein kinase MARK-A (1060 aa).

Basic and acidic residues-rich tracts occupy residues 1–11 (METLKEEEQFR) and 23–37 (HLKE…EREQ). Disordered stretches follow at residues 1 to 52 (METL…LQLQ) and 67 to 88 (NKIP…SISV). Composition is skewed to low complexity over residues 38–52 (QQQQ…LQLQ) and 68–88 (KIPS…SISV). Residues 109-361 (YLVIKTIGRG…MEEIINHPWL (253 aa)) enclose the Protein kinase domain. ATP is bound by residues 115–123 (IGRGQFGKV) and Lys139. The active-site Proton acceptor is the Asp232. Low complexity predominate over residues 409 to 475 (INNINNTMAT…TTTTNATTTT (67 aa)). 4 disordered regions span residues 409–488 (INNI…NNEE), 560–701 (GENS…SPLC), 714–886 (LREK…PVHS), and 899–966 (DDKS…QEPR). The UBA domain maps to 488 to 528 (ELDQEIIEELVGLGFEREELCNSIRQNKYNDAASTYFLLQG). Residues 577–594 (TVDSPKSTNTPQYRSSNT) are compositionally biased toward polar residues. Composition is skewed to low complexity over residues 603–613 (QQQQQQQQQQQ), 620–637 (QQQN…NNHN), 650–699 (STTV…NPSP), and 720–760 (TTTN…TSPN). The segment covering 761–770 (LQPFSLASTA) has biased composition (polar residues). 2 stretches are compositionally biased toward low complexity: residues 771–799 (NNNN…SLNS) and 811–831 (QQQQ…NSSS). Residues 837 to 846 (QRQESRKLED) are compositionally biased toward basic and acidic residues. Low complexity-rich tracts occupy residues 904–926 (NSSS…TNNT) and 935–965 (QNSN…QQEP). Residues 1008-1057 (IECETEGVRFSIEICRLPRLSVNGLKFKRIGGSSWRYKSICKDLLSQMKL) form the KA1 domain.

The protein belongs to the protein kinase superfamily. CAMK Ser/Thr protein kinase family. SNF1 subfamily.

The enzyme catalyses L-seryl-[protein] + ATP = O-phospho-L-seryl-[protein] + ADP + H(+). The catalysed reaction is L-threonyl-[protein] + ATP = O-phospho-L-threonyl-[protein] + ADP + H(+). The chain is Probable serine/threonine-protein kinase MARK-A (mrkA) from Dictyostelium discoideum (Social amoeba).